Reading from the N-terminus, the 300-residue chain is Diphthine methyl ester synthase (300 aa).

S-adenosyl-L-methionine is bound by residues Leu-9, Asp-85, Gly-88, 113-114, Leu-164, Leu-222, and His-247; that span reads SV.

This sequence belongs to the diphthine synthase family.

It is found in the cytoplasm. It carries out the reaction 2-[(3S)-amino-3-carboxypropyl]-L-histidyl-[translation elongation factor 2] + 4 S-adenosyl-L-methionine = diphthine methyl ester-[translation elongation factor 2] + 4 S-adenosyl-L-homocysteine + 3 H(+). It participates in protein modification; peptidyl-diphthamide biosynthesis. Functionally, S-adenosyl-L-methionine-dependent methyltransferase that catalyzes four methylations of the modified target histidine residue in translation elongation factor 2 (EF-2), to form an intermediate called diphthine methyl ester. The four successive methylation reactions represent the second step of diphthamide biosynthesis. In Yarrowia lipolytica (strain CLIB 122 / E 150) (Yeast), this protein is Diphthine methyl ester synthase (DPH5).